The sequence spans 212 residues: Ras-related protein Rab-2A (212 aa).

Ala2 carries the post-translational modification N-acetylalanine. The tract at residues 2–19 (AYAYLFKYIIIGDTGVGK) is required for interaction with PRKCI. The GTP site is built by Gly16, Val17, Gly18, Lys19, Ser20, Cys21, and Thr38. Mg(2+) is bound at residue Ser20. The Switch 1 motif lies at 37-42 (LTIGVE). Positions 38 and 61 each coordinate Mg(2+). Residues 63 to 72 (AGQESFRSIT) carry the Switch 2 motif. GTP-binding residues include Gly64, Asn119, Lys120, Asp122, Ala150, and Lys151. The segment at 190-212 (QHAATNASHGSNQGGQQAGGGCC) is disordered. The segment covering 201–212 (NQGGQQAGGGCC) has biased composition (gly residues). 2 S-geranylgeranyl cysteine lipidation sites follow: Cys211 and Cys212.

The protein belongs to the small GTPase superfamily. Rab family. Interacts with PRKCI. Interacts with TRIP11. Interacts (in GTP-bound form) with GARIN1B. Interacts (GTP-bound) with HOPS complex component VPS39; interaction contributes to obtaining a functional HOPS complex that promotes autophagosome-lysosome membrane fusion driven by STX17-SNAP29-VAMP8. Interacts with VPS41. Requires Mg(2+) as cofactor. Post-translationally, prenylated. Prenylation is required for association with cellular membranes.

The protein localises to the endoplasmic reticulum-Golgi intermediate compartment membrane. It localises to the melanosome. Its subcellular location is the endoplasmic reticulum membrane. It is found in the golgi apparatus membrane. The protein resides in the cytoplasmic vesicle. The protein localises to the secretory vesicle. It localises to the acrosome. Its subcellular location is the autophagosome membrane. It carries out the reaction GTP + H2O = GDP + phosphate + H(+). Its activity is regulated as follows. Regulated by guanine nucleotide exchange factors (GEFs) which promote the exchange of bound GDP for free GTP, GTPase activating proteins (GAPs) which increase the GTP hydrolysis activity, and GDP dissociation inhibitors (GDIs) which inhibit the dissociation of the nucleotide from the GTPase. Functionally, the small GTPases Rab are key regulators of intracellular membrane trafficking, from the formation of transport vesicles to their fusion with membranes. Rabs cycle between active GTP-bound and inactive GDP-bound states. In their active state, drive transport of vesicular carriers from donor organelles to acceptor organelles to regulate the membrane traffic that maintains organelle identity and morphology. RAB2A regulates autophagy by promoting autophagosome-lysosome fusion via recruitment of the HOPS endosomal tethering complex; this process involves autophagosomal RAB2A and lysosomal RAB39A recruitment of HOPS subcomplexes VPS39-VPS11 and VPS41-VPS16-VPS18-VPS33A, respectively, which assemble into a functional complex to mediate membrane tethering and SNAREs-driven membrane fusion. Required for protein transport from the endoplasmic reticulum to the Golgi complex. Regulates the compacted morphology of the Golgi. Together with RAB2B, redundantly required for efficient autophagic flux. This is Ras-related protein Rab-2A from Mus musculus (Mouse).